Reading from the N-terminus, the 214-residue chain is Thymidylate kinase (214 aa).

Residue 10 to 17 (GGEGAGKS) participates in ATP binding.

It belongs to the thymidylate kinase family.

The catalysed reaction is dTMP + ATP = dTDP + ADP. Functionally, phosphorylation of dTMP to form dTDP in both de novo and salvage pathways of dTTP synthesis. This chain is Thymidylate kinase, found in Brucella suis biovar 1 (strain 1330).